Here is a 198-residue protein sequence, read N- to C-terminus: Photosystem I assembly protein Ycf4 (198 aa).

A disordered region spans residues 1–20 (MTASTTINKGDSPNGDSSAS). 2 consecutive transmembrane segments (helical) span residues 36-58 (YWWA…SSYL) and 78-100 (LVMG…VILW).

This sequence belongs to the Ycf4 family.

It is found in the cellular thylakoid membrane. Seems to be required for the assembly of the photosystem I complex. This Nostoc sp. (strain PCC 7120 / SAG 25.82 / UTEX 2576) protein is Photosystem I assembly protein Ycf4.